The following is a 128-amino-acid chain: MFAVIKTGGRQYRVVPDDVLEVGKIEGEVGTIVQLGEVLMLGGDTPQLGLPTIAGASVAAEVLDHKRGPKVISFKKRRRKNSKRKRGYRDEITVLRITEILADGKKPSVGPRPKRVKAEPAPAADAAE.

The interval 104–128 (GKKPSVGPRPKRVKAEPAPAADAAE) is disordered. Low complexity predominate over residues 119 to 128 (EPAPAADAAE).

It belongs to the bacterial ribosomal protein bL21 family. Part of the 50S ribosomal subunit. Contacts protein L20.

Its function is as follows. This protein binds to 23S rRNA in the presence of protein L20. This is Large ribosomal subunit protein bL21 from Rhodopseudomonas palustris (strain BisB5).